The primary structure comprises 130 residues: Small ribosomal subunit protein uS11 (130 aa).

This sequence belongs to the universal ribosomal protein uS11 family. Part of the 30S ribosomal subunit. Interacts with proteins S7 and S18. Binds to IF-3.

Its function is as follows. Located on the platform of the 30S subunit, it bridges several disparate RNA helices of the 16S rRNA. Forms part of the Shine-Dalgarno cleft in the 70S ribosome. In Gloeobacter violaceus (strain ATCC 29082 / PCC 7421), this protein is Small ribosomal subunit protein uS11.